Reading from the N-terminus, the 105-residue chain is Iron-sulfur cluster assembly protein CyaY (105 aa).

It belongs to the frataxin family.

In terms of biological role, involved in iron-sulfur (Fe-S) cluster assembly. May act as a regulator of Fe-S biogenesis. The protein is Iron-sulfur cluster assembly protein CyaY of Psychromonas ingrahamii (strain DSM 17664 / CCUG 51855 / 37).